The following is a 253-amino-acid chain: Triosephosphate isomerase (253 aa).

9 to 11 (NWK) is a substrate binding site. The active-site Electrophile is His-97. Catalysis depends on Glu-169, which acts as the Proton acceptor. Substrate contacts are provided by residues Gly-175, Ser-215, and 236-237 (GG).

It belongs to the triosephosphate isomerase family. As to quaternary structure, homodimer.

Its subcellular location is the cytoplasm. It catalyses the reaction D-glyceraldehyde 3-phosphate = dihydroxyacetone phosphate. The protein operates within carbohydrate biosynthesis; gluconeogenesis. It functions in the pathway carbohydrate degradation; glycolysis; D-glyceraldehyde 3-phosphate from glycerone phosphate: step 1/1. Its function is as follows. Involved in the gluconeogenesis. Catalyzes stereospecifically the conversion of dihydroxyacetone phosphate (DHAP) to D-glyceraldehyde-3-phosphate (G3P). The chain is Triosephosphate isomerase from Staphylococcus haemolyticus (strain JCSC1435).